The chain runs to 331 residues: UDP-GalNAc:beta-1,3-N-acetylgalactosaminyltransferase 1 (331 aa).

Residues Met-1–Trp-20 are Cytoplasmic-facing. The helical; Signal-anchor for type II membrane protein transmembrane segment at Ser-21–Val-43 threads the bilayer. Residues Ile-44 to Tyr-331 are Lumenal-facing. N-linked (GlcNAc...) asparagine glycans are attached at residues Asn-72, Asn-154, Asn-198, Asn-212, and Asn-326.

This sequence belongs to the glycosyltransferase 31 family. Mg(2+) serves as cofactor.

It is found in the golgi apparatus membrane. The catalysed reaction is a globoside Gb3Cer (d18:1(4E)) + UDP-N-acetyl-alpha-D-galactosamine = a globoside Gb4Cer (d18:1(4E)) + UDP + H(+). It functions in the pathway protein modification; protein glycosylation. In terms of biological role, transfers N-acetylgalactosamine onto globotriaosylceramide. Plays a critical role in preimplantation stage embryonic development. In Sus scrofa (Pig), this protein is UDP-GalNAc:beta-1,3-N-acetylgalactosaminyltransferase 1 (B3GALNT1).